The sequence spans 700 residues: Calpain-2 catalytic subunit (700 aa).

An N-acetylalanine modification is found at Ala-2. Residues 2-19 constitute a propeptide, anchors to the small subunit; the sequence is AGIAAKLAKDREAAEGLG. The region spanning 45-344 is the Calpain catalytic domain; the sequence is LFQDPSFPAI…YSRLEICNLT (300 aa). Ca(2+)-binding residues include Ile-89, Gly-91, and Asp-96. Residue Cys-105 is part of the active site. Positions 175, 229, and 230 each coordinate Ca(2+). Catalysis depends on residues His-262 and Asn-286. Ca(2+) is bound by residues Glu-292, Asp-299, and Glu-323. Residues 345 to 514 form a domain III region; the sequence is PDTLTSDTYK…KKADYQAVDD (170 aa). The linker stretch occupies residues 515–529; the sequence is EIEANLEEFDISEDD. Residues 530-700 are domain IV; it reads IDDGFRRLFA…LISWLCFSVL (171 aa). Positions 542, 545, 547, 552, 585, 587, 589, 591, 596, 615, 617, 619, 621, 626, 658, and 661 each coordinate Ca(2+). EF-hand domains lie at 572 to 605 and 602 to 637; these read FSIETCKIMVDMLDSDGSGKLGLKEFYILWTKIQ and TKIQKYQKIYREIDVDRSGTMNSYEMRKALEEAGFK. One can recognise an EF-hand 3 domain in the interval 667–700; it reads VRLETLFKIFKQLDPENTGTIELDLISWLCFSVL.

The protein belongs to the peptidase C2 family. In terms of assembly, forms a heterodimer with a small (regulatory) subunit (CAPNS1). Interacts with CPEB3; this leads to cleavage of CPEB3. Interacts with PIDD1 alternative open reading frame protein altPIDD1. It depends on Ca(2+) as a cofactor. In terms of tissue distribution, ubiquitous.

Its subcellular location is the cytoplasm. The protein resides in the cell membrane. The enzyme catalyses Broad endopeptidase specificity.. Its activity is regulated as follows. Activated by 200-1000 micromolar concentrations of calcium and inhibited by calpastatin. Functionally, calcium-regulated non-lysosomal thiol-protease which catalyzes limited proteolysis of substrates involved in cytoskeletal remodeling and signal transduction. Proteolytically cleaves MYOC at 'Arg-226'. Proteolytically cleaves CPEB3 following neuronal stimulation which abolishes CPEB3 translational repressor activity, leading to translation of CPEB3 target mRNAs. The protein is Calpain-2 catalytic subunit (CAPN2) of Homo sapiens (Human).